The following is a 393-amino-acid chain: Phosphoglycerate kinase (393 aa).

Residues 21 to 23, 59 to 62, Arg-118, and Arg-151 contribute to the substrate site; these read DFN and HLGR. ATP-binding positions include Lys-201, Glu-323, and 349 to 352; that span reads GGDT.

This sequence belongs to the phosphoglycerate kinase family. As to quaternary structure, monomer.

Its subcellular location is the cytoplasm. The catalysed reaction is (2R)-3-phosphoglycerate + ATP = (2R)-3-phospho-glyceroyl phosphate + ADP. It participates in carbohydrate degradation; glycolysis; pyruvate from D-glyceraldehyde 3-phosphate: step 2/5. The polypeptide is Phosphoglycerate kinase (Pelotomaculum thermopropionicum (strain DSM 13744 / JCM 10971 / SI)).